The following is a 529-amino-acid chain: Bifunctional purine biosynthesis protein PurH (529 aa).

Positions 1–148 (MQQRRPVRRA…KNHKDVAIVV (148 aa)) constitute an MGS-like domain. An N6-acetyllysine modification is found at Lys-287.

Belongs to the PurH family.

The enzyme catalyses (6R)-10-formyltetrahydrofolate + 5-amino-1-(5-phospho-beta-D-ribosyl)imidazole-4-carboxamide = 5-formamido-1-(5-phospho-D-ribosyl)imidazole-4-carboxamide + (6S)-5,6,7,8-tetrahydrofolate. It carries out the reaction IMP + H2O = 5-formamido-1-(5-phospho-D-ribosyl)imidazole-4-carboxamide. The protein operates within purine metabolism; IMP biosynthesis via de novo pathway; 5-formamido-1-(5-phospho-D-ribosyl)imidazole-4-carboxamide from 5-amino-1-(5-phospho-D-ribosyl)imidazole-4-carboxamide (10-formyl THF route): step 1/1. It functions in the pathway purine metabolism; IMP biosynthesis via de novo pathway; IMP from 5-formamido-1-(5-phospho-D-ribosyl)imidazole-4-carboxamide: step 1/1. The sequence is that of Bifunctional purine biosynthesis protein PurH from Escherichia coli O45:K1 (strain S88 / ExPEC).